We begin with the raw amino-acid sequence, 515 residues long: NADH-quinone oxidoreductase subunit N (515 aa).

Helical transmembrane passes span 14–34 (ITPILVILGAACLGVLVEAFL), 40–60 (WSAQVGLSLLALVAAGVALAL), 80–100 (APTLFLWGTLLALGLGAILLI), 138–158 (TEVFPLALFALGGMMVFCAAN), 160–180 (LLTMFIALEVLSLPLYLMCGL), 195–215 (YFLLGAFASAFFLYGLALLYG), 239–259 (LFAGLGLLVVGLLFKASVGPF), 271–291 (PTAVTGFMAACTKVAAFGGIL), 307–327 (GVLYAVAIVSMAIGVVLGLTQ), 333–353 (MIAYSSVAHAGFLLVGSIALT), 361–381 (MFYLLAYGFTTIAIFGVISLV), 404–424 (VAWVFTFLLLALAGIPMTSGF), 438–458 (GMAPLVVVALVASAVAAFFYL), and 485–505 (AAITLGVVVTLLLGVLPSLAL).

Belongs to the complex I subunit 2 family. NDH-1 is composed of 14 different subunits. Subunits NuoA, H, J, K, L, M, N constitute the membrane sector of the complex.

It localises to the cell membrane. It catalyses the reaction a quinone + NADH + 5 H(+)(in) = a quinol + NAD(+) + 4 H(+)(out). Functionally, NDH-1 shuttles electrons from NADH, via FMN and iron-sulfur (Fe-S) centers, to quinones in the respiratory chain. The immediate electron acceptor for the enzyme in this species is believed to be a menaquinone. Couples the redox reaction to proton translocation (for every two electrons transferred, four hydrogen ions are translocated across the cytoplasmic membrane), and thus conserves the redox energy in a proton gradient. In Saccharopolyspora erythraea (strain ATCC 11635 / DSM 40517 / JCM 4748 / NBRC 13426 / NCIMB 8594 / NRRL 2338), this protein is NADH-quinone oxidoreductase subunit N.